We begin with the raw amino-acid sequence, 62 residues long: Photosystem II reaction center protein Z (62 aa).

The next 2 helical transmembrane spans lie at 8 to 28 (AVFA…VVFA) and 41 to 61 (FSGT…NSLI).

It belongs to the PsbZ family. In terms of assembly, PSII is composed of 1 copy each of membrane proteins PsbA, PsbB, PsbC, PsbD, PsbE, PsbF, PsbH, PsbI, PsbJ, PsbK, PsbL, PsbM, PsbT, PsbY, PsbZ, Psb30/Ycf12, at least 3 peripheral proteins of the oxygen-evolving complex and a large number of cofactors. It forms dimeric complexes.

The protein localises to the plastid. The protein resides in the chloroplast thylakoid membrane. Its function is as follows. May control the interaction of photosystem II (PSII) cores with the light-harvesting antenna, regulates electron flow through the 2 photosystem reaction centers. PSII is a light-driven water plastoquinone oxidoreductase, using light energy to abstract electrons from H(2)O, generating a proton gradient subsequently used for ATP formation. This chain is Photosystem II reaction center protein Z, found in Amborella trichopoda.